A 162-amino-acid polypeptide reads, in one-letter code: Probable chemoreceptor glutamine deamidase CheD (162 aa).

Belongs to the CheD family.

The enzyme catalyses L-glutaminyl-[protein] + H2O = L-glutamyl-[protein] + NH4(+). In terms of biological role, probably deamidates glutamine residues to glutamate on methyl-accepting chemotaxis receptors (MCPs), playing an important role in chemotaxis. The chain is Probable chemoreceptor glutamine deamidase CheD from Clostridium botulinum (strain ATCC 19397 / Type A).